A 397-amino-acid polypeptide reads, in one-letter code: Elongation factor Tu (397 aa).

One can recognise a tr-type G domain in the interval 10–206 (KPHVNIGTIG…AIDSYIPTPE (197 aa)). The segment at 19–26 (GHVDHGKT) is G1. Residue 19 to 26 (GHVDHGKT) coordinates GTP. Thr26 contributes to the Mg(2+) binding site. The tract at residues 60 to 64 (GITIN) is G2. The segment at 81-84 (DCPG) is G3. GTP contacts are provided by residues 81-85 (DCPGH) and 136-139 (NKAD). The G4 stretch occupies residues 136–139 (NKAD). Positions 174 to 176 (SAL) are G5.

It belongs to the TRAFAC class translation factor GTPase superfamily. Classic translation factor GTPase family. EF-Tu/EF-1A subfamily. In terms of assembly, monomer.

The protein resides in the cytoplasm. It catalyses the reaction GTP + H2O = GDP + phosphate + H(+). Its function is as follows. GTP hydrolase that promotes the GTP-dependent binding of aminoacyl-tRNA to the A-site of ribosomes during protein biosynthesis. This chain is Elongation factor Tu, found in Clostridium botulinum (strain Loch Maree / Type A3).